The following is a 449-amino-acid chain: Phosphoglucosamine mutase (449 aa).

Ser100 serves as the catalytic Phosphoserine intermediate. Mg(2+) is bound by residues Ser100, Asp241, Asp243, and Asp245. Position 100 is a phosphoserine (Ser100).

This sequence belongs to the phosphohexose mutase family. It depends on Mg(2+) as a cofactor. In terms of processing, activated by phosphorylation.

It carries out the reaction alpha-D-glucosamine 1-phosphate = D-glucosamine 6-phosphate. Its function is as follows. Catalyzes the conversion of glucosamine-6-phosphate to glucosamine-1-phosphate. The polypeptide is Phosphoglucosamine mutase (Clostridium botulinum (strain Kyoto / Type A2)).